Consider the following 316-residue polypeptide: MPKNMSPICPVCGQENDAANRYCSFCGTRFNSSLPSMDLFQAQTVQAPAPEQMVFSGNGQDLPSLTNHPFWGAIPVLGLLTVLPLGLFIFGMAIDANDWPYAALLVFLLFLFTLLIFLGQLWGNVSQAREFILSERPLILWRYSPDEWQQLRQAQFSESAEDMQEMAGCAVPFFAGVGTLLGTVLGSVEGFVGAVPGAAIGAMAGYIFGKILVPIATGLNQSTNRELYRTDLPVWVVLAPGEIYYNRQYFRADTIGDRLEGITLDEGALTWLRIETFAPRGSITASFDGNILVPHRMLATVKAVLPQLQQFISGED.

4 helical membrane passes run 74–94 (IPVL…GMAI), 99–119 (WPYA…IFLG), 166–186 (MAGC…TVLG), and 188–208 (VEGF…GYIF).

The protein resides in the cell membrane. This is an uncharacterized protein from Synechocystis sp. (strain ATCC 27184 / PCC 6803 / Kazusa).